Consider the following 217-residue polypeptide: Oxygen regulatory protein NreC (217 aa).

The Response regulatory domain occupies 2 to 119 (KIVIADDHAV…QLISAVRTVY (118 aa)). A 4-aspartylphosphate modification is found at aspartate 53. Positions 148–213 (TNDPFRILSK…ELVEYALKKK (66 aa)) constitute an HTH luxR-type domain. Positions 172 to 191 (NKEIAEKLFVSVKTVEAHKT) form a DNA-binding region, H-T-H motif.

In terms of processing, phosphorylated by NreB.

Its subcellular location is the cytoplasm. Member of the two-component regulatory system NreB/NreC involved in the control of dissimilatory nitrate/nitrite reduction in response to oxygen. Phosphorylated NreC binds to a GC-rich palindromic sequence at the promoters of the nitrate (narGHJI) and nitrite (nir) reductase operons, as well as the putative nitrate transporter gene narT, and activates their expression. The chain is Oxygen regulatory protein NreC (nreC) from Staphylococcus carnosus (strain TM300).